A 360-amino-acid chain; its full sequence is Nucleoporin SEH1 (360 aa).

WD repeat units follow at residues 10–49 (DHKDLIHDVSFDFHGRRMATCSSDQSVKVWDKSESGDWHC), 55–96 (THSG…SNDK), 111–152 (DSRT…NLSQ), 160–210 (SCKL…RKYA), 217–258 (TVTD…KELT), and 276–315 (NHNSQVWRVSWNITGTVLASSGDDGCVRLWKANYMDNWKC). K12 participates in a covalent cross-link: Glycyl lysine isopeptide (Lys-Gly) (interchain with G-Cter in SUMO2). 2 positions are modified to phosphoserine: S179 and S190. A compositionally biased stretch (polar residues) spans 324–354 (SPVNGSSQQGTSNPSLGSNIPSLQNSLNGSS). Residues 324 to 360 (SPVNGSSQQGTSNPSLGSNIPSLQNSLNGSSAGRKHS) are disordered.

The protein belongs to the WD repeat SEC13 family. As to quaternary structure, component of the Nup107-160 subcomplex of the nuclear pore complex (NPC). The Nup107-160 subcomplex includes NUP160, NUP133, NUP107, NUP98, NUP85, NUP43, NUP37, SEH1 and SEC13. The SEH1 subunit appears to be only weakly associated with the Nup107-160 subcomplex. Component of the GATOR2 subcomplex, composed of MIOS, SEC13, SEH1L, WDR24 and WDR59. The GATOR2 complex interacts with CASTOR1 and CASTOR2; the interaction is negatively regulated by arginine. The GATOR2 complex interacts with SESN1, SESN2 and SESN3; the interaction is negatively regulated by amino acids. SESN1, SESN2 and SESN3 convey leucine availability via direct interaction with SEH1L and WDR24.

It is found in the chromosome. The protein resides in the centromere. Its subcellular location is the kinetochore. The protein localises to the nucleus. It localises to the nuclear pore complex. It is found in the lysosome membrane. With respect to regulation, the GATOR2 complex is negatively regulated by the upstream amino acid sensors CASTOR1 and SESN2, which sequester the GATOR2 complex in absence of amino acids. In the presence of abundant amino acids, GATOR2 is released from CASTOR1 and SESN2 and activated. Its function is as follows. Component of the Nup107-160 subcomplex of the nuclear pore complex (NPC). The Nup107-160 subcomplex is required for the assembly of a functional NPC. The Nup107-160 subcomplex is also required for normal kinetochore microtubule attachment, mitotic progression and chromosome segregation. This subunit plays a role in recruitment of the Nup107-160 subcomplex to the kinetochore. Functionally, as a component of the GATOR2 complex, functions as an activator of the amino acid-sensing branch of the mTORC1 signaling pathway. The GATOR2 complex indirectly activates mTORC1 through the inhibition of the GATOR1 subcomplex. GATOR2 probably acts as an E3 ubiquitin-protein ligase toward GATOR1. In the presence of abundant amino acids, the GATOR2 complex mediates ubiquitination of the NPRL2 core component of the GATOR1 complex, leading to GATOR1 inactivation. In the absence of amino acids, GATOR2 is inhibited, activating the GATOR1 complex. Within the GATOR2 complex, SEC13 and SEH1L are required to stabilize the complex. The chain is Nucleoporin SEH1 (SEH1L) from Pongo abelii (Sumatran orangutan).